Consider the following 237-residue polypeptide: NAD(P)H-quinone oxidoreductase subunit K, chloroplastic (237 aa).

[4Fe-4S] cluster contacts are provided by cysteine 55, cysteine 56, cysteine 120, and cysteine 151.

It belongs to the complex I 20 kDa subunit family. In terms of assembly, NDH is composed of at least 16 different subunits, 5 of which are encoded in the nucleus. The cofactor is [4Fe-4S] cluster.

It localises to the plastid. The protein localises to the chloroplast thylakoid membrane. It catalyses the reaction a plastoquinone + NADH + (n+1) H(+)(in) = a plastoquinol + NAD(+) + n H(+)(out). The catalysed reaction is a plastoquinone + NADPH + (n+1) H(+)(in) = a plastoquinol + NADP(+) + n H(+)(out). Its function is as follows. NDH shuttles electrons from NAD(P)H:plastoquinone, via FMN and iron-sulfur (Fe-S) centers, to quinones in the photosynthetic chain and possibly in a chloroplast respiratory chain. The immediate electron acceptor for the enzyme in this species is believed to be plastoquinone. Couples the redox reaction to proton translocation, and thus conserves the redox energy in a proton gradient. This Nephroselmis olivacea (Green alga) protein is NAD(P)H-quinone oxidoreductase subunit K, chloroplastic.